The following is a 303-amino-acid chain: UDP-3-O-acyl-N-acetylglucosamine deacetylase (303 aa).

Histidine 78, histidine 237, and aspartate 241 together coordinate Zn(2+). Histidine 264 functions as the Proton donor in the catalytic mechanism.

Belongs to the LpxC family. Requires Zn(2+) as cofactor.

It carries out the reaction a UDP-3-O-[(3R)-3-hydroxyacyl]-N-acetyl-alpha-D-glucosamine + H2O = a UDP-3-O-[(3R)-3-hydroxyacyl]-alpha-D-glucosamine + acetate. It functions in the pathway glycolipid biosynthesis; lipid IV(A) biosynthesis; lipid IV(A) from (3R)-3-hydroxytetradecanoyl-[acyl-carrier-protein] and UDP-N-acetyl-alpha-D-glucosamine: step 2/6. In terms of biological role, catalyzes the hydrolysis of UDP-3-O-myristoyl-N-acetylglucosamine to form UDP-3-O-myristoylglucosamine and acetate, the committed step in lipid A biosynthesis. The polypeptide is UDP-3-O-acyl-N-acetylglucosamine deacetylase (Saccharophagus degradans (strain 2-40 / ATCC 43961 / DSM 17024)).